Consider the following 410-residue polypeptide: Dipeptidase ataJ (410 aa).

Zn(2+)-binding residues include histidine 27, aspartate 29, and glutamate 138. Histidine 165 serves as a coordination point for substrate. Residues 180 to 200 (TSSPWSEYGGQTHDPGDEPSR) are disordered. Arginine 258 and aspartate 318 together coordinate substrate.

Belongs to the metallo-dependent hydrolases superfamily. Peptidase M19 family. It depends on Zn(2+) as a cofactor.

The catalysed reaction is an L-aminoacyl-L-amino acid + H2O = 2 an L-alpha-amino acid. It functions in the pathway mycotoxin biosynthesis. In terms of biological role, dipeptidase; part of the gene cluster that mediates the biosynthesis of acetylaranotin, a member of the epipolythiodioxopiperazine (ETP) class of toxins characterized by a disulfide-bridged cyclic dipeptide. The first step of acetylaranotin biosynthesis is performed by the NRPS ataP which produces diketopiperazine cyclo-L-Phe-L-Phe via the condensation of 2 phenylalanines (L-Phe). The ataC domain of ataTC then catalyzes the formation of bishydroxylation of cyclo-L-Phe-L-Phe. The glutathione S-transferase domain ataG in ataIMG further catalyzes the conjugation of two glutathiones to the bishydroxylated intermediate. Next, the dipeptidase ataJ removes the Glu residues. The following step is performed by the carbon sulfur lyase domain ataI of ataIMG which may convert the bis-cysteinyl adduct to yield an epidithiol intermediate. The ataT domain from ataTC then catalyzes the oxidation of the free dithiols, followed by a cyclization step catalyzed by the cytochrome P450 ataF. AtaF probably acts as an epoxidase to promote a dual epoxidation formation at C8 and C9 along with C8' and C9', followed by the spontaneous nucleophilic attack of the amide nitrogens N10 and N10' to yield an intermediate with the pyrrolidine partial structure. The final steps of acetylaranotin biosynthesis involve the acetylation and ring rearrangement of an epitetrathiodiketopiperazine intermediate to produce acetylaranotin. AtaH probably catalyzes the acetylation of epitetrathiodiketopiperazine to produce a diacetate and ataY is responsible for the formation of the dihydrooxepin moiety that converts the diacetate intermediate to acetylaranotin via acetylapoaranotin. Both enzymes could function independently in the absence of the other. The acetylaranotin bis-thiomethyltransferase ataS located outside of acetylaranotin gene cluster is the main thiomethyltransferase responsible for converting acetylaranotin and its related intermediates to their methylated forms. The sequence is that of Dipeptidase ataJ from Aspergillus terreus (strain NIH 2624 / FGSC A1156).